Consider the following 375-residue polypeptide: Ubl carboxyl-terminal hydrolase 18 (375 aa).

The disordered stretch occupies residues 18-45 (ESPQSPADLEEKKEEDSNMKREQPRERP). Over residues 26–45 (LEEKKEEDSNMKREQPRERP) the composition is skewed to basic and acidic residues. Residues 55 to 373 (VGLHNIGQTC…TAYLLVYMKM (319 aa)) enclose the USP domain. C64 functions as the Nucleophile in the catalytic mechanism. The active-site Proton acceptor is the H321.

Belongs to the peptidase C19 family. As to quaternary structure, interacts with STAT2; the interaction is direct. Interacts with IFNAR2; indirectly via STAT2, it negatively regulates the assembly of the ternary interferon-IFNAR1-IFNAR2 complex and inhibits type I interferon signaling. Interacts with STING1. Interacts with USP20.

It catalyses the reaction Thiol-dependent hydrolysis of ester, thioester, amide, peptide and isopeptide bonds formed by the C-terminal Gly of ubiquitin (a 76-residue protein attached to proteins as an intracellular targeting signal).. Its function is as follows. Interferon-induced ISG15-specific protease that plays a crucial role for maintaining a proper balance of ISG15-conjugated proteins in cells. Regulates protein ISGylation by efficiently cleaving ISG15 conjugates linked via isopeptide bonds. Regulates T-cell activation and T-helper 17 (Th17) cell differentiation by deubiquitinating TAK1, likely to keep TAK1-TAB complexes in steady conditions. In turn, restricts activation of NF-kappa-B, NFAT, and JNK as well as expression of IL2 in T-cells after TCR activation. Acts as a molecular adapter with USP20 to promote innate antiviral response through deubiquitinating STING1. Involved also in the negative regulation of the inflammatory response triggered by type I interferon. Upon recruitment by STAT2 to the type I interferon receptor subunit IFNAR2 interferes with the assembly of the ternary interferon-IFNAR1-IFNAR2 complex and acts as a negative regulator of the type I interferon signaling pathway. The sequence is that of Ubl carboxyl-terminal hydrolase 18 (USP18) from Pongo abelii (Sumatran orangutan).